We begin with the raw amino-acid sequence, 650 residues long: MEENNKANIYDSSSIKVLEGLEAVRKRPGMYIGSTGEEGLHHMIWEIVDNSIDEAMGGFASFVKLTLEDNFVTRVEDDGRGIPVDIHPKTNRSTVETVFTVLHAGGKFDNDSYKVSGGLHGVGASVVNALSSSFKVWVFRQNKKYFLSFSDGGKVIGDLVQEGNSEKEHGTIVEFVPDFSVMEKSDYKQTVIVSRLQQLAFLNKGIRIDFVDNRKQNPQSFSWKYDGGLVEYIHHLNNEKEPLFNEVIADEKTETVKAVNRDENYTVKVEVAFQYNKTYNQSIFSFCNNINTTEGGTHVEGFRNALVKIINRFAVENKFLKDSDEKINRDDVCEGLTAIISIKHPNPQYEGQTKKKLGNTEVRPLVNSVVSEIFERFMLENPQEANAIIRKTLLAQEARRRSQEARELTRRKSPFDSGSLPGKLADCTTRDPSISELYIVEGDSAGGTAKTGRDRYFQAILPLRGKILNVEKSNFEQIFNNAEISALVMAIGCGIKPDFELEKLRYSKIVIMTDADVDGAHIRTLLLTFFFRFMYPLVEQGNIFIAQPPLYKVSYSHKDLYMHTDVQLEQWKSQNPNVKFGLQRYKGLGEMDALQLWETTMDPKVRTLLKVTVEDASIADKAFSLLMGDEVPPRREFIEKNARSVKNIDI.

Basic and acidic residues predominate over residues 400–414; sequence RRSQEARELTRRKSP. A disordered region spans residues 400-422; the sequence is RRSQEARELTRRKSPFDSGSLPG. Residues 435-549 enclose the Toprim domain; that stretch reads SELYIVEGDS…QGNIFIAQPP (115 aa). Mg(2+) is bound by residues Glu441, Asp514, and Asp516.

The protein belongs to the type II topoisomerase GyrB family. As to quaternary structure, heterotetramer, composed of two GyrA and two GyrB chains. In the heterotetramer, GyrA contains the active site tyrosine that forms a transient covalent intermediate with DNA, while GyrB binds cofactors and catalyzes ATP hydrolysis. Mg(2+) serves as cofactor. The cofactor is Mn(2+). It depends on Ca(2+) as a cofactor.

The protein resides in the cytoplasm. It carries out the reaction ATP-dependent breakage, passage and rejoining of double-stranded DNA.. Functionally, a type II topoisomerase that negatively supercoils closed circular double-stranded (ds) DNA in an ATP-dependent manner to modulate DNA topology and maintain chromosomes in an underwound state. Negative supercoiling favors strand separation, and DNA replication, transcription, recombination and repair, all of which involve strand separation. Also able to catalyze the interconversion of other topological isomers of dsDNA rings, including catenanes and knotted rings. Type II topoisomerases break and join 2 DNA strands simultaneously in an ATP-dependent manner. The chain is DNA gyrase subunit B from Mycoplasma genitalium (strain ATCC 33530 / DSM 19775 / NCTC 10195 / G37) (Mycoplasmoides genitalium).